The sequence spans 371 residues: N-acetyldiaminopimelate deacetylase (371 aa).

The active site involves Asp-68. Glu-127 functions as the Proton acceptor in the catalytic mechanism.

Belongs to the peptidase M20A family. N-acetyldiaminopimelate deacetylase subfamily.

The catalysed reaction is N-acetyl-(2S,6S)-2,6-diaminopimelate + H2O = (2S,6S)-2,6-diaminopimelate + acetate. It participates in amino-acid biosynthesis; L-lysine biosynthesis via DAP pathway; LL-2,6-diaminopimelate from (S)-tetrahydrodipicolinate (acetylase route): step 3/3. In terms of biological role, catalyzes the conversion of N-acetyl-diaminopimelate to diaminopimelate and acetate. This is N-acetyldiaminopimelate deacetylase from Halalkalibacterium halodurans (strain ATCC BAA-125 / DSM 18197 / FERM 7344 / JCM 9153 / C-125) (Bacillus halodurans).